The primary structure comprises 375 residues: N5-carboxyaminoimidazole ribonucleotide synthase (375 aa).

ATP-binding positions include Arg-108, Lys-148, 153-159 (GYDGKGQ), 183-186 (EQYL), Glu-191, His-214, and 268-269 (NE). Residues 112–298 (KQTLQDSGSN…QFDTHIKAIT (187 aa)) form the ATP-grasp domain.

Belongs to the PurK/PurT family. In terms of assembly, homodimer.

The enzyme catalyses 5-amino-1-(5-phospho-beta-D-ribosyl)imidazole + hydrogencarbonate + ATP = 5-carboxyamino-1-(5-phospho-D-ribosyl)imidazole + ADP + phosphate + 2 H(+). The protein operates within purine metabolism; IMP biosynthesis via de novo pathway; 5-amino-1-(5-phospho-D-ribosyl)imidazole-4-carboxylate from 5-amino-1-(5-phospho-D-ribosyl)imidazole (N5-CAIR route): step 1/2. In terms of biological role, catalyzes the ATP-dependent conversion of 5-aminoimidazole ribonucleotide (AIR) and HCO(3)(-) to N5-carboxyaminoimidazole ribonucleotide (N5-CAIR). In Staphylococcus saprophyticus subsp. saprophyticus (strain ATCC 15305 / DSM 20229 / NCIMB 8711 / NCTC 7292 / S-41), this protein is N5-carboxyaminoimidazole ribonucleotide synthase.